We begin with the raw amino-acid sequence, 539 residues long: Prolyl 4-hydroxylase subunit alpha-2 (539 aa).

A signal peptide spans 1-16 (MRAVLLVCLLAGLAHA). Asn-110 carries N-linked (GlcNAc...) asparagine glycosylation. One can recognise a Fe2OG dioxygenase domain in the interval 401–509 (TSEELQVANY…KWVSNKWIHE (109 aa)). 3 residues coordinate Fe cation: His-419, Asp-421, and His-490. Lys-500 contributes to the 2-oxoglutarate binding site.

It belongs to the P4HA family. As to quaternary structure, heterotetramer of two alpha chains and two beta chains. Exist either as a phy-2(2)/pdi-2(2) tetramer or as a phy-1/phy-2/pdi-2(2) tetramer. Fe(2+) serves as cofactor. It depends on L-ascorbate as a cofactor.

It localises to the endoplasmic reticulum lumen. It carries out the reaction L-prolyl-[collagen] + 2-oxoglutarate + O2 = trans-4-hydroxy-L-prolyl-[collagen] + succinate + CO2. Functionally, catalyzes the post-translational formation of 4-hydroxyproline in -Xaa-Pro-Gly- sequences in collagens and other proteins. The sequence is that of Prolyl 4-hydroxylase subunit alpha-2 (phy-2) from Caenorhabditis elegans.